The following is a 218-amino-acid chain: CTP-dependent diacylglycerol kinase 1 (218 aa).

Residues 1-19 (MSTKLTWSQWSKKHEIPRK) are Lumenal-facing. The helical transmembrane segment at 20 to 37 (ALHTSIGFFALLLQGCGY) threads the bilayer. A topological domain (cytoplasmic) is located at residue H38. The helical transmembrane segment at 39-59 (AAQIIPVIEIGFIPAFTGDVI) threads the bilayer. At 60 to 88 (RFNWPAFSRLYNRVIGPLMRESEKNAWNG) the chain is on the lumenal side. Residues 89–109 (VIFYMIGVWIVLKVFPEEIAV) form a helical membrane-spanning segment. At 110–142 (MSVLLLSWCDTTASTVGRKWGKYTPKIAKNKSL) the chain is on the cytoplasmic side. The helical transmembrane segment at 143 to 163 (AGSLGAFVCGVFCCYVYWGLF) threads the bilayer. The Lumenal segment spans residues 164–179 (RTGPDSLAAQSRIPFP). The next 2 membrane-spanning stretches (helical) occupy residues 180-200 (WLCLINGFIGAFAEAMDVWGL) and 201-217 (DDNLVIPVVSACLLYLI). Residue M218 is a topological domain, lumenal.

The protein belongs to the DGK1 family. Ca(2+) serves as cofactor. Mg(2+) is required as a cofactor.

It is found in the endoplasmic reticulum membrane. Its subcellular location is the nucleus membrane. It catalyses the reaction a 1,2-diacyl-sn-glycerol + CTP = a 1,2-diacyl-sn-glycero-3-phosphate + CDP + H(+). Functionally, CTP-dependent diacylglycerol kinase that catalyzes the phosphorylation of diacylglycerol (DAG) to phosphatidate (PA). Controls phosphatidate levels at the nuclear envelope. Counteracts the activity of PA phosphatase ned1. May be involved in vesicle trafficking between the endoplasmic reticulum and the Golgi apparatus. Involved in pre-tRNA splicing. The chain is CTP-dependent diacylglycerol kinase 1 (ptp4) from Schizosaccharomyces pombe (strain 972 / ATCC 24843) (Fission yeast).